A 305-amino-acid polypeptide reads, in one-letter code: Aquaporin-1 (305 aa).

The disordered stretch occupies residues 1 to 34 (MSSNDSNDTDKQHTRLDPTGVDDAYIPPEQPETK). Topologically, residues 1–48 (MSSNDSNDTDKQHTRLDPTGVDDAYIPPEQPETKHHRFKISKDTLRNH) are cytoplasmic. The helical transmembrane segment at 49-69 (FIAAAGEFCGTFMFLWCAYVI) threads the bilayer. The Extracellular portion of the chain corresponds to 70–91 (CNVANHDVALVAAPDGSHPGQL). The chain crosses the membrane as a helical span at residues 92-112 (IMIAIGFGFSVMFSIWCFAGV). Topologically, residues 113-136 (SGGALNPAMSLSLCLARAVSPTRC) are cytoplasmic. Residues 118–120 (NPA) carry the NPA 1 motif. Residues 137–157 (VVMWVSQIVAGMAAGGAASAM) traverse the membrane as a helical segment. Residues 158–176 (TPGEVLFANSLGLGCSRTR) are Extracellular-facing. The helical transmembrane segment at 177–197 (GLFLEMFGTAILCLTVLMTAV) threads the bilayer. Over 198 to 203 (EKRETN) the chain is Cytoplasmic. The helical transmembrane segment at 204 to 224 (FMAALPIGISLFIAHVALTAY) threads the bilayer. Topologically, residues 225-248 (TGTGVNPARSLGAAVAARYFPHYH) are extracellular. Residues 230–232 (NPA) carry the NPA 2 motif. The chain crosses the membrane as a helical span at residues 249 to 269 (WIYWIGTLLGSILAWSVWQLL). The Cytoplasmic portion of the chain corresponds to 270–305 (QILDYTTYVTAEKAASTKEKAQKKGETSSSSAVAEV). Basic and acidic residues predominate over residues 286–295 (TKEKAQKKGE). A disordered region spans residues 286–305 (TKEKAQKKGETSSSSAVAEV). A compositionally biased stretch (polar residues) spans 296–305 (TSSSSAVAEV).

Belongs to the MIP/aquaporin (TC 1.A.8) family.

The protein resides in the endoplasmic reticulum membrane. It localises to the cell membrane. Its function is as follows. Water channel required to facilitate the transport of water across membranes. Involved in sporulation, freeze tolerance and osmotolerance. Is non-functional in most laboratory strains. In Saccharomyces cerevisiae (strain YJM789) (Baker's yeast), this protein is Aquaporin-1 (AQY1).